Here is a 143-residue protein sequence, read N- to C-terminus: Large ribosomal subunit protein uL11 (143 aa).

Belongs to the universal ribosomal protein uL11 family. Part of the ribosomal stalk of the 50S ribosomal subunit. Interacts with L10 and the large rRNA to form the base of the stalk. L10 forms an elongated spine to which L12 dimers bind in a sequential fashion forming a multimeric L10(L12)X complex. One or more lysine residues are methylated.

Functionally, forms part of the ribosomal stalk which helps the ribosome interact with GTP-bound translation factors. This is Large ribosomal subunit protein uL11 from Pseudomonas putida (strain ATCC 700007 / DSM 6899 / JCM 31910 / BCRC 17059 / LMG 24140 / F1).